A 157-amino-acid polypeptide reads, in one-letter code: Ribosomal RNA large subunit methyltransferase H (157 aa).

S-adenosyl-L-methionine-binding positions include L73, G105, and 124–129 (LSKMTF).

It belongs to the RNA methyltransferase RlmH family. As to quaternary structure, homodimer.

Its subcellular location is the cytoplasm. The enzyme catalyses pseudouridine(1915) in 23S rRNA + S-adenosyl-L-methionine = N(3)-methylpseudouridine(1915) in 23S rRNA + S-adenosyl-L-homocysteine + H(+). Its function is as follows. Specifically methylates the pseudouridine at position 1915 (m3Psi1915) in 23S rRNA. This is Ribosomal RNA large subunit methyltransferase H from Phocaeicola vulgatus (strain ATCC 8482 / DSM 1447 / JCM 5826 / CCUG 4940 / NBRC 14291 / NCTC 11154) (Bacteroides vulgatus).